Reading from the N-terminus, the 225-residue chain is Ribosome maturation factor RimM (225 aa).

A PRC barrel domain is found at 144 to 225; sequence ADEFYWVDLI…RIVVDWEADY (82 aa).

It belongs to the RimM family. As to quaternary structure, binds ribosomal protein uS19.

Its subcellular location is the cytoplasm. Its function is as follows. An accessory protein needed during the final step in the assembly of 30S ribosomal subunit, possibly for assembly of the head region. Essential for efficient processing of 16S rRNA. May be needed both before and after RbfA during the maturation of 16S rRNA. It has affinity for free ribosomal 30S subunits but not for 70S ribosomes. The chain is Ribosome maturation factor RimM from Burkholderia vietnamiensis (strain G4 / LMG 22486) (Burkholderia cepacia (strain R1808)).